The sequence spans 575 residues: Alpha-(1,6)-fucosyltransferase (575 aa).

Residues 1–9 (MRPWTGSWR) are Cytoplasmic-facing. A helical; Signal-anchor for type II membrane protein transmembrane segment spans residues 10–30 (WIMLILFAWGTLLFYIGGHLV). Residues 31–575 (RDNDHPDHSS…KVPHVPEAEK (545 aa)) are Lumenal-facing. 3 disulfides stabilise this stretch: Cys-204/Cys-266, Cys-212/Cys-230, and Cys-218/Cys-222. Positions 206 to 493 (KAKKLVCNIN…PDASANFHSL (288 aa)) constitute a GT23 domain. At Ser-278 the chain carries Phosphoserine. The SH3-binding signature appears at 299-305 (PRPPYLP). Residues 365–366 (RR) are important for donor substrate binding. An intrachain disulfide couples Cys-465 to Cys-472. Positions 502-563 (QNAHNQIAIY…PSYKVREKIE (62 aa)) constitute an SH3 domain.

Belongs to the glycosyltransferase 23 family. In terms of processing, tyrosine phosphorylated by PKDCC/VLK. In terms of tissue distribution, highest expression found in brain. Also found in heart, lung, spleen and kidney.

Its subcellular location is the golgi apparatus. The protein localises to the golgi stack membrane. It catalyses the reaction N(4)-{beta-D-GlcNAc-(1-&gt;2)-alpha-D-Man-(1-&gt;3)-[beta-D-GlcNAc-(1-&gt;2)-alpha-D-Man-(1-&gt;6)]-beta-D-Man-(1-&gt;4)-beta-D-GlcNAc-(1-&gt;4)-beta-D-GlcNAc}-L-asparaginyl-[protein] + GDP-beta-L-fucose = an N(4)-{beta-D-GlcNAc-(1-&gt;2)-alpha-D-Man-(1-&gt;3)-[beta-D-GlcNAc-(1-&gt;2)-alpha-D-Man-(1-&gt;6)]-beta-D-Man-(1-&gt;4)-beta-D-GlcNAc-(1-&gt;4)-[alpha-L-Fuc-(1-&gt;6)]-beta-D-GlcNAc}-L-asparaginyl-[protein] + GDP + H(+). It participates in protein modification; protein glycosylation. In terms of biological role, catalyzes the addition of fucose in alpha 1-6 linkage to the first GlcNAc residue, next to the peptide chains in N-glycans. In Bos taurus (Bovine), this protein is Alpha-(1,6)-fucosyltransferase (FUT8).